The chain runs to 302 residues: Protoheme IX farnesyltransferase 2 (302 aa).

9 consecutive transmembrane segments (helical) span residues 14–34, 36–56, 85–105, 108–128, 133–153, 163–183, 209–229, 230–250, and 264–284; these read IIFG…QGSV, WWLL…GCAI, AALA…WFCT, LATG…SLYM, VYGT…GYCA, AILL…IAIF, IVLY…GGYA, GYGY…MALS, and QVFF…AVDG.

This sequence belongs to the UbiA prenyltransferase family. Protoheme IX farnesyltransferase subfamily.

It localises to the cell inner membrane. It catalyses the reaction heme b + (2E,6E)-farnesyl diphosphate + H2O = Fe(II)-heme o + diphosphate. It functions in the pathway porphyrin-containing compound metabolism; heme O biosynthesis; heme O from protoheme: step 1/1. Its function is as follows. Converts heme B (protoheme IX) to heme O by substitution of the vinyl group on carbon 2 of heme B porphyrin ring with a hydroxyethyl farnesyl side group. This chain is Protoheme IX farnesyltransferase 2, found in Chromobacterium violaceum (strain ATCC 12472 / DSM 30191 / JCM 1249 / CCUG 213 / NBRC 12614 / NCIMB 9131 / NCTC 9757 / MK).